Reading from the N-terminus, the 508-residue chain is MIISPGTMRLADWRAVQEGDAARLDAGCRAAVEAAAGCVAAILERDEAVYGINTGFGRLASTRIEPADLATLQRNLVLSHAAGVGEALPAPIVRMVIALKLASLARGASGVRWETIEALQGLLDHDILPVIPAQGSVGASGDLAPLAHMTCALLGIGEVLGAAGREDAAAALGRAGMAPLVLGPKEGLALLNGTQVSTAIALTGLFRAERLCRAALLTGALTTDAARGSDAPFDPRIHALRGHAGQMAVAAALRTLLAGSGIRDSHRIGDPRVQDPYSLRCQPQVMGAVFDLLGQAGRTLATEANGVSDNPLVFAETGEVISGGNFHAEYVAFAADQIALAIAEAGSLAERRIALLVDPAHSGLPAFLTRAPGLNSGYMIPQVTAAALVAENRMLAHPASVDSIPTSANQEDHVSMATHGAMRLLRMADNLSHVLAIEYLMAAQGIDLLAPLATSAPLGRMHAVLRESVPVLGEDRLMAPDIARARALIESGAAERAAGCDALPELDA.

Residues 139–141 (ASG) constitute a cross-link (5-imidazolinone (Ala-Gly)). Ser140 bears the 2,3-didehydroalanine (Ser) mark.

Belongs to the PAL/histidase family. In terms of processing, contains an active site 4-methylidene-imidazol-5-one (MIO), which is formed autocatalytically by cyclization and dehydration of residues Ala-Ser-Gly.

It is found in the cytoplasm. It catalyses the reaction L-histidine = trans-urocanate + NH4(+). It participates in amino-acid degradation; L-histidine degradation into L-glutamate; N-formimidoyl-L-glutamate from L-histidine: step 1/3. This chain is Histidine ammonia-lyase, found in Acidiphilium cryptum (strain JF-5).